The sequence spans 214 residues: uncharacterized protein (214 aa).

Residues 39 to 68 (KLRSKKEVEEKIKEVDRELEEVVNAGVSIN) are a coiled coil. Residues 99–114 (EIKVEAPEPDEEKLPD) are compositionally biased toward basic and acidic residues. Residues 99–162 (EIKVEAPEPD…EEVEFDEEDD (64 aa)) form a disordered region. Positions 123 to 162 (SDLDMDFEDLGQEIPLDADEQEEEEEEEEVEEVEFDEEDD) are enriched in acidic residues. Positions 138-212 (LDADEQEEEE…IQRLKVLSGG (75 aa)) form a coiled coil.

This is an uncharacterized protein from Archaeoglobus fulgidus (strain ATCC 49558 / DSM 4304 / JCM 9628 / NBRC 100126 / VC-16).